Reading from the N-terminus, the 338-residue chain is Acetoin:2,6-dichlorophenolindophenol oxidoreductase subunit beta (338 aa).

As to quaternary structure, tetramer of 2 alpha and 2 beta subunits.

The protein operates within ketone degradation; acetoin degradation. Functionally, catalyzes the 2,6-dichlorophenolindophenol-dependent cleavage of acetoin into acetate and acetaldehyde, in vitro. The beta subunit is probably not the catalytic subunit of the enzyme. This Cupriavidus necator (strain ATCC 17699 / DSM 428 / KCTC 22496 / NCIMB 10442 / H16 / Stanier 337) (Ralstonia eutropha) protein is Acetoin:2,6-dichlorophenolindophenol oxidoreductase subunit beta (acoB).